Consider the following 97-residue polypeptide: Small ribosomal subunit protein bS6 (97 aa).

This sequence belongs to the bacterial ribosomal protein bS6 family.

Its function is as follows. Binds together with bS18 to 16S ribosomal RNA. The polypeptide is Small ribosomal subunit protein bS6 (Listeria innocua serovar 6a (strain ATCC BAA-680 / CLIP 11262)).